A 121-amino-acid polypeptide reads, in one-letter code: Flagellar hook-basal body complex protein FliE (121 aa).

The protein belongs to the FliE family.

It localises to the bacterial flagellum basal body. This Treponema denticola (strain ATCC 35405 / DSM 14222 / CIP 103919 / JCM 8153 / KCTC 15104) protein is Flagellar hook-basal body complex protein FliE.